Reading from the N-terminus, the 250-residue chain is MLLILSSAKTLVFDDAFTVPKITEPIFKKEGEFLVDLLQKFSEKDLEKLLKVSESLANLNYQRFQSFNTSEKQASILAYRGDVFKQLQLNKFNKNDYLFAQNHVRIISGLYGILRPLDQISPYRLEMNTCLKTENNDNLYQFWEEKVTEKLNNELEQHNNQVLLNLASDEYSRMIKNEKFNYPIFKVSFKEMRNGKLKTIGIIAKKSRGLMTNWIIENKIDDSSKLKDYNGLGYHYDDSLSNEKEMVFIK.

This sequence belongs to the UPF0246 family.

The protein is UPF0246 protein cce_3295 of Crocosphaera subtropica (strain ATCC 51142 / BH68) (Cyanothece sp. (strain ATCC 51142)).